Here is a 252-residue protein sequence, read N- to C-terminus: Imidazole glycerol phosphate synthase subunit HisF (252 aa).

Active-site residues include aspartate 11 and aspartate 130.

It belongs to the HisA/HisF family. Heterodimer of HisH and HisF.

It localises to the cytoplasm. The catalysed reaction is 5-[(5-phospho-1-deoxy-D-ribulos-1-ylimino)methylamino]-1-(5-phospho-beta-D-ribosyl)imidazole-4-carboxamide + L-glutamine = D-erythro-1-(imidazol-4-yl)glycerol 3-phosphate + 5-amino-1-(5-phospho-beta-D-ribosyl)imidazole-4-carboxamide + L-glutamate + H(+). Its pathway is amino-acid biosynthesis; L-histidine biosynthesis; L-histidine from 5-phospho-alpha-D-ribose 1-diphosphate: step 5/9. Functionally, IGPS catalyzes the conversion of PRFAR and glutamine to IGP, AICAR and glutamate. The HisF subunit catalyzes the cyclization activity that produces IGP and AICAR from PRFAR using the ammonia provided by the HisH subunit. This chain is Imidazole glycerol phosphate synthase subunit HisF, found in Hydrogenobaculum sp. (strain Y04AAS1).